We begin with the raw amino-acid sequence, 122 residues long: Venom protein 7.1 (122 aa).

The N-terminal stretch at 1–19 is a signal peptide; the sequence is MRFSIISASLVLIFANVKA.

Post-translationally, contains 3 disulfide bonds. In terms of tissue distribution, expressed by the venom gland.

The protein localises to the secreted. The chain is Venom protein 7.1 from Lychas mucronatus (Chinese swimming scorpion).